Here is a 220-residue protein sequence, read N- to C-terminus: Ribosomal RNA large subunit methyltransferase E (220 aa).

Positions 60, 62, 92, 108, and 133 each coordinate S-adenosyl-L-methionine. The Proton acceptor role is filled by Lys-173.

This sequence belongs to the class I-like SAM-binding methyltransferase superfamily. RNA methyltransferase RlmE family.

The protein localises to the cytoplasm. It carries out the reaction uridine(2552) in 23S rRNA + S-adenosyl-L-methionine = 2'-O-methyluridine(2552) in 23S rRNA + S-adenosyl-L-homocysteine + H(+). Its function is as follows. Specifically methylates the uridine in position 2552 of 23S rRNA at the 2'-O position of the ribose in the fully assembled 50S ribosomal subunit. In Burkholderia multivorans (strain ATCC 17616 / 249), this protein is Ribosomal RNA large subunit methyltransferase E.